The chain runs to 769 residues: Serine/threonine-protein kinase PLK4 (769 aa).

One can recognise a Protein kinase domain in the interval 14–267 (YEVQHLLGKG…LEAVLCHPFM (254 aa)). ATP is bound by residues 20–28 (LGKGGFATV) and Lys43. The active-site Proton acceptor is the Asp138. Residues 381–498 (EDRISVPPLN…ARFVGLVKSK (118 aa)) enclose the Cryptic POLO box 1 (CPB1) domain. Residues 499–602 (TPKVTYFSTL…GRRPITDVQP (104 aa)) form the Cryptic POLO box 2 (CPB2) domain. Residues 660–739 (PIKRINVPEI…IPNIQLKLKT (80 aa)) form the POLO box domain.

The protein belongs to the protein kinase superfamily. Ser/Thr protein kinase family. CDC5/Polo subfamily. As to quaternary structure, homodimer. Interacts with Alms1a. Post-translationally, ubiquitinated by the SCF-slmb ubiquitin ligase complex; leading to its degradation by the proteasome during interphase and regulating centriole number and ensuring the block to centriole reduplication. Expressed in testis (at protein level).

Its subcellular location is the cytoplasm. The protein localises to the cytoskeleton. The protein resides in the microtubule organizing center. It is found in the centrosome. It localises to the centriole. The catalysed reaction is L-seryl-[protein] + ATP = O-phospho-L-seryl-[protein] + ADP + H(+). The enzyme catalyses L-threonyl-[protein] + ATP = O-phospho-L-threonyl-[protein] + ADP + H(+). Serine/threonine-protein kinase that plays a central role in centriole duplication. Able to trigger procentriole formation on the surface of the mother centriole cylinder, using mother centriole as a platform, leading to the recruitment of centriole biogenesis proteins such as Sas-6. When overexpressed, it is able to induce centrosome amplification through the simultaneous generation of multiple procentrioles adjoining each parental centriole during S phase. Centrosome amplification following overexpression can initiate tumorigenesis, highlighting the importance of centrosome regulation in cancers. In Drosophila melanogaster (Fruit fly), this protein is Serine/threonine-protein kinase PLK4 (SAK).